A 338-amino-acid chain; its full sequence is MKTDIVIIGAGPVGIFTAFQAGMLDMRCHIIDVLDQAGGQCTALYPEKPIYDIPGYPVITAQKLIEQLMEQSSPFKPVYHLSQKVEKISNNEGESFTVITNIGTEVKCKAVIVAAGNGMFKPNRPPLSGILEYENKSVFYSVNKISDFQDKTIVIAGGGDSAADWTVELSKVAKKIYVIHRRKEFRCTPETRNKLESLEIDGKIELVVPYQLHELAGGNGQLSAVIVKNIASKEEKEISADFLLPFFGLSMNLGPINNWGIQLEHSRIVVDPATLKTSRDRIYAIGDIAIYSGKLKLILNGFAESAMACYDIYKVIHNSPVNFQYSTSKGIHGKEKLP.

Asp-32, Gln-40, Tyr-45, Val-85, Phe-120, Asp-287, and Thr-327 together coordinate FAD.

It belongs to the ferredoxin--NADP reductase type 2 family. Homodimer. Requires FAD as cofactor.

The catalysed reaction is 2 reduced [2Fe-2S]-[ferredoxin] + NADP(+) + H(+) = 2 oxidized [2Fe-2S]-[ferredoxin] + NADPH. The protein is Ferredoxin--NADP reductase of Wolbachia pipientis wMel.